Here is a 122-residue protein sequence, read N- to C-terminus: uncharacterized protein (122 aa).

Positions 79-114 (VIEDVASAIKEMMESAAKDLDKIEEVIKESLEKYLR) form a coiled coil.

This is an uncharacterized protein from Archaeoglobus fulgidus (strain ATCC 49558 / DSM 4304 / JCM 9628 / NBRC 100126 / VC-16).